The sequence spans 154 residues: Immunity protein YwqK (154 aa).

As to quaternary structure, probably interacts with cognate toxin YwqJ but not with other non-cognate LXG toxins. The interaction inhibits the toxic activity of YwqJ.

It is found in the cytoplasm. In terms of biological role, immunity component of one of 6 LXG toxin-immunity modules in this strain. They promote kin selection, mediate competition in biofilms, and drive spatial segregation of different strains, indicating that LXG toxins may help avoid warfare between strains in biofilms. Mediates intercellular competition during biofilm formation; disruption of the operon disadvantages the bacteria, but overexpression of the cognate immunity protein restores growth in competition with wild-type. In situ neutralizes the toxic effect of cognate toxin YqcG. Probably neutralizes the ability to inhibit growth of cognate toxin YwqJ. Probably does not have immunity protein activity on other LXG toxins. The sequence is that of Immunity protein YwqK (ywqK) from Bacillus subtilis (strain 168).